A 271-amino-acid chain; its full sequence is Uridine-cytidine kinase 1-A (271 aa).

24–32 (GGTASGKST) serves as a coordination point for ATP. The substrate site is built by aspartate 81, tyrosine 109, histidine 114, arginine 163, arginine 172, and glutamine 180. An ATP-binding site is contributed by aspartate 209. The disordered stretch occupies residues 241-271 (SQKRTFPGQGESGGLILPGKRTHLESSSRPH). Residues 262–271 (THLESSSRPH) show a composition bias toward basic and acidic residues.

This sequence belongs to the uridine kinase family.

The catalysed reaction is uridine + ATP = UMP + ADP + H(+). It catalyses the reaction cytidine + ATP = CMP + ADP + H(+). The protein operates within pyrimidine metabolism; CTP biosynthesis via salvage pathway; CTP from cytidine: step 1/3. Its pathway is pyrimidine metabolism; UMP biosynthesis via salvage pathway; UMP from uridine: step 1/1. Its function is as follows. Phosphorylates uridine and cytidine to uridine monophosphate and cytidine monophosphate. Does not phosphorylate deoxyribonucleosides or purine ribonucleosides. Can use ATP or GTP as a phosphate donor. This is Uridine-cytidine kinase 1-A (uck1-a) from Xenopus laevis (African clawed frog).